A 214-amino-acid chain; its full sequence is Ribosomal RNA small subunit methyltransferase G (214 aa).

S-adenosyl-L-methionine is bound by residues Gly77, Phe82, Val128 to Glu129, and Arg143.

This sequence belongs to the methyltransferase superfamily. RNA methyltransferase RsmG family.

It is found in the cytoplasm. It carries out the reaction guanosine(527) in 16S rRNA + S-adenosyl-L-methionine = N(7)-methylguanosine(527) in 16S rRNA + S-adenosyl-L-homocysteine. Specifically methylates the N7 position of guanine in position 527 of 16S rRNA. This is Ribosomal RNA small subunit methyltransferase G from Nitrosomonas europaea (strain ATCC 19718 / CIP 103999 / KCTC 2705 / NBRC 14298).